A 411-amino-acid polypeptide reads, in one-letter code: Anaerobic nitric oxide reductase flavorubredoxin homolog (411 aa).

The zinc metallo-hydrolase stretch occupies residues 30–210 (LRGSSYNSYL…PFSRLVTPKI (181 aa)). Fe cation contacts are provided by histidine 79, glutamate 81, aspartate 83, histidine 147, aspartate 166, histidine 227, cysteine 360, cysteine 363, cysteine 393, and cysteine 396. The 52-residue stretch at 355 to 406 (GPRMQCSVCQWIYDPAKGEPMQDVAPGTPWSEVPDNFLCPECSLGKDVFDEL) folds into the Rubredoxin-like domain.

It in the N-terminal section; belongs to the zinc metallo-hydrolase group 3 family. In terms of assembly, homotetramer. It depends on Fe cation as a cofactor.

It localises to the cytoplasm. The protein operates within nitrogen metabolism; nitric oxide reduction. Functionally, anaerobic nitric oxide reductase; uses NADH to detoxify nitric oxide (NO), protecting several 4Fe-4S NO-sensitive enzymes. Has at least 2 reductase partners, only one of which (NorW, flavorubredoxin reductase) has been identified. NO probably binds to the di-iron center. Also able to function as an aerobic oxygen reductase. The polypeptide is Anaerobic nitric oxide reductase flavorubredoxin homolog (Escherichia coli O157:H7).